A 414-amino-acid polypeptide reads, in one-letter code: uncharacterized protein (414 aa).

The Nop domain occupies 246–360 (EAPNITKLAG…LNKRVEEIRR (115 aa)). A disordered region spans residues 358–414 (IRRKYPKPPKKKKKEKPKAKKKEKKGKKEKSKKKKDKKKDKKGKKERKVIGKTKSRK). Over residues 361 to 414 (KYPKPPKKKKKEKPKAKKKEKKGKKEKSKKKKDKKKDKKGKKERKVIGKTKSRK) the composition is skewed to basic residues.

The protein belongs to the NOP5/NOP56 family.

This is an uncharacterized protein from Methanocaldococcus jannaschii (strain ATCC 43067 / DSM 2661 / JAL-1 / JCM 10045 / NBRC 100440) (Methanococcus jannaschii).